The chain runs to 263 residues: Type III pantothenate kinase (263 aa).

An ATP-binding site is contributed by 6–13; sequence DVGNTRIK. Substrate contacts are provided by residues tyrosine 92 and 99–102; that span reads GTDR. The active-site Proton acceptor is the aspartate 101. Residue threonine 124 coordinates ATP. Residue threonine 174 coordinates substrate.

Belongs to the type III pantothenate kinase family. In terms of assembly, homodimer. NH4(+) is required as a cofactor. It depends on K(+) as a cofactor.

The protein resides in the cytoplasm. The enzyme catalyses (R)-pantothenate + ATP = (R)-4'-phosphopantothenate + ADP + H(+). It functions in the pathway cofactor biosynthesis; coenzyme A biosynthesis; CoA from (R)-pantothenate: step 1/5. In terms of biological role, catalyzes the phosphorylation of pantothenate (Pan), the first step in CoA biosynthesis. The polypeptide is Type III pantothenate kinase (Azoarcus sp. (strain BH72)).